We begin with the raw amino-acid sequence, 516 residues long: AMP phosphorylase (516 aa).

Residues Gly169, 195–200, and Thr204 each bind AMP; that span reads SRAITG. The Proton donor role is filled by Asp257. Ser265 and Lys289 together coordinate AMP.

This sequence belongs to the thymidine/pyrimidine-nucleoside phosphorylase family. Type 2 subfamily.

It carries out the reaction AMP + phosphate = alpha-D-ribose 1,5-bisphosphate + adenine. The enzyme catalyses CMP + phosphate = cytosine + alpha-D-ribose 1,5-bisphosphate. It catalyses the reaction UMP + phosphate = alpha-D-ribose 1,5-bisphosphate + uracil. In terms of biological role, catalyzes the conversion of AMP and phosphate to adenine and ribose 1,5-bisphosphate (R15P). Exhibits phosphorylase activity toward CMP and UMP in addition to AMP. Functions in an archaeal AMP degradation pathway, together with R15P isomerase and RubisCO. The chain is AMP phosphorylase from Methanospirillum hungatei JF-1 (strain ATCC 27890 / DSM 864 / NBRC 100397 / JF-1).